A 143-amino-acid polypeptide reads, in one-letter code: MSTFFAKANAVERKWYVIDAAGLPLGRLATEAARILRGKHKPTFTPNVDTGDHVIIINAEKVVLTGNKLDQKMYRRHSGYPGGLKETPYRKLMQNMPERAVEHAVKGMLPHNKLGAQMYTKLKVYRDENHPHQAQQPEAWTIQ.

The protein belongs to the universal ribosomal protein uL13 family. Part of the 50S ribosomal subunit.

Functionally, this protein is one of the early assembly proteins of the 50S ribosomal subunit, although it is not seen to bind rRNA by itself. It is important during the early stages of 50S assembly. The chain is Large ribosomal subunit protein uL13 from Desulfitobacterium hafniense (strain Y51).